The following is a 382-amino-acid chain: Intermediate transcription factor 3 large subunit (382 aa).

It belongs to the orthopoxvirus OPG150 family. Heterodimerizes with protein A8 to form the virus intermediate transcription factor (VITF)-3.

In terms of biological role, acts with RNA polymerase to initiate transcription from intermediate gene promoters. This chain is Intermediate transcription factor 3 large subunit (OPG150), found in Bos taurus (Bovine).